The chain runs to 369 residues: Choline-phosphate cytidylyltransferase B (369 aa).

The disordered stretch occupies residues 1–27 (MPVLTTDAESETGIPKSLSNEPPSETM). 4 residues coordinate CTP: Ile-84, Phe-85, His-92, and Lys-122. Phosphocholine-binding residues include Lys-122 and Trp-151. The CTP site is built by His-168, Asp-169, Tyr-173, Gln-195, Arg-196, Thr-197, and Ile-200. The tract at residues 309–369 (RMLQALSPKQ…SMSEGDEDEK (61 aa)) is disordered. 7 positions are modified to phosphoserine: Ser-315, Ser-319, Ser-322, Ser-323, Ser-329, Ser-331, and Ser-335. Positions 319 to 339 (SPVSSPTRSRSPSRSPSPTFS) are enriched in low complexity. Residue Thr-345 is modified to Phosphothreonine. Phosphoserine occurs at positions 346, 349, 350, 355, 360, and 362. A compositionally biased stretch (low complexity) spans 351-362 (PKAASASISSMS).

Belongs to the cytidylyltransferase family. In terms of assembly, homodimer. As to expression, highly expressed in brain (at protein level). Expressed in liver (at protein level). Expressed at lower levels in lung and gonads. In terms of tissue distribution, expressed in brain (at protein level). Expressed at lower levels in lung and gonads.

It is found in the endoplasmic reticulum. The protein resides in the cytoplasm. The enzyme catalyses phosphocholine + CTP + H(+) = CDP-choline + diphosphate. Its pathway is phospholipid metabolism; phosphatidylcholine biosynthesis; phosphatidylcholine from phosphocholine: step 1/2. In terms of biological role, catalyzes the key rate-limiting step in the CDP-choline pathway for phosphatidylcholine biosynthesis. Plays an important role in ovary maturation and the maintenance of sperm production. Catalyzes the key rate-limiting step in the CDP-choline pathway for phosphatidylcholine biosynthesis. This is Choline-phosphate cytidylyltransferase B (Pcyt1b) from Mus musculus (Mouse).